A 401-amino-acid polypeptide reads, in one-letter code: Imidazolonepropionase (401 aa).

Residues H66 and H68 each coordinate Fe(3+). Zn(2+) is bound by residues H66 and H68. 4-imidazolone-5-propanoate is bound by residues R75, Y138, and H171. Y138 is a binding site for N-formimidoyl-L-glutamate. H236 contacts Fe(3+). H236 is a Zn(2+) binding site. Residue Q239 participates in 4-imidazolone-5-propanoate binding. D311 is a Fe(3+) binding site. Position 311 (D311) interacts with Zn(2+). 2 residues coordinate N-formimidoyl-L-glutamate: N313 and G315. T316 contacts 4-imidazolone-5-propanoate.

It belongs to the metallo-dependent hydrolases superfamily. HutI family. It depends on Zn(2+) as a cofactor. Fe(3+) is required as a cofactor.

It localises to the cytoplasm. The enzyme catalyses 4-imidazolone-5-propanoate + H2O = N-formimidoyl-L-glutamate. Its pathway is amino-acid degradation; L-histidine degradation into L-glutamate; N-formimidoyl-L-glutamate from L-histidine: step 3/3. In terms of biological role, catalyzes the hydrolytic cleavage of the carbon-nitrogen bond in imidazolone-5-propanoate to yield N-formimidoyl-L-glutamate. It is the third step in the universal histidine degradation pathway. The chain is Imidazolonepropionase from Acinetobacter baumannii (strain AB0057).